The following is a 335-amino-acid chain: Adenosine deaminase (335 aa).

Positions 12 and 14 each coordinate Zn(2+). Substrate-binding residues include H14 and D16. H197 is a Zn(2+) binding site. Catalysis depends on E200, which acts as the Proton donor. D278 is a Zn(2+) binding site.

This sequence belongs to the metallo-dependent hydrolases superfamily. Adenosine and AMP deaminases family. Adenosine deaminase subfamily. It depends on Zn(2+) as a cofactor.

The catalysed reaction is adenosine + H2O + H(+) = inosine + NH4(+). It carries out the reaction 2'-deoxyadenosine + H2O + H(+) = 2'-deoxyinosine + NH4(+). Its function is as follows. Catalyzes the hydrolytic deamination of adenosine and 2-deoxyadenosine. This is Adenosine deaminase from Clostridium botulinum (strain Okra / Type B1).